The chain runs to 467 residues: Dimethylamine methyltransferase MtbB1 (467 aa).

Pyl-356 is a non-standard amino acid (pyrrolysine).

The protein belongs to the dimethylamine methyltransferase family.

It carries out the reaction Co(I)-[dimethylamine-specific corrinoid protein] + dimethylamine + H(+) = methyl-Co(III)-[dimethylamine-specific corrinoid protein] + methylamine. Its pathway is one-carbon metabolism; methanogenesis from dimethylamine. Functionally, catalyzes the transfer of a methyl group from dimethylamine to the corrinoid cofactor of MtbC. This is Dimethylamine methyltransferase MtbB1 (mtbB1) from Methanosarcina barkeri (strain Fusaro / DSM 804).